Here is a 365-residue protein sequence, read N- to C-terminus: Probable galacturonosyltransferase-like 10 (365 aa).

Topologically, residues 1–10 (MMSGSRLASR) are cytoplasmic. A helical; Signal-anchor for type II membrane protein membrane pass occupies residues 11 to 31 (LIIIFSIISTSFFTVESIRLF). Topologically, residues 32 to 365 (PDSFDDASSD…LQYNQELEIL (334 aa)) are lumenal. A glycan (N-linked (GlcNAc...) asparagine) is linked at Asn209.

Belongs to the glycosyltransferase 8 family.

It is found in the golgi apparatus membrane. Its pathway is glycan metabolism; pectin biosynthesis. May be involved in pectin and/or xylans biosynthesis in cell walls. The sequence is that of Probable galacturonosyltransferase-like 10 (GATL10) from Arabidopsis thaliana (Mouse-ear cress).